The sequence spans 70 residues: Turripeptide Gsp9.3 (70 aa).

Residues 1-20 form the signal peptide; the sequence is MKVYCLLLVLLVGLVSQAHG. The Kazal-like domain occupies 21 to 70; sequence QLDKKCQMVCTFDYRPVCGSDGRTYPNKCTLTSTACMSQRSITVFHDGEC. 3 disulfide bridges follow: Cys26–Cys56, Cys30–Cys49, and Cys38–Cys70.

The protein belongs to the conopeptide P-like superfamily. Expressed by the venom duct.

It localises to the secreted. Functionally, acts as a neurotoxin by inhibiting an ion channel. May also act as a serine protease inhibitor, since it possess the kazal serine protease inhibitor signature. This chain is Turripeptide Gsp9.3, found in Gemmula speciosa (Splendid gem-turris).